The primary structure comprises 352 residues: Protein-glutamate methylesterase/protein-glutamine glutaminase (352 aa).

A Response regulatory domain is found at 4-121; the sequence is RVLIVDDSAT…YDGIDEIQKE (118 aa). A 4-aspartylphosphate modification is found at aspartate 55. A CheB-type methylesterase domain is found at 159-351; that stretch reads AQTTNKLIAI…VKIASLLSER (193 aa). Residues serine 171, histidine 197, and aspartate 293 contribute to the active site.

This sequence belongs to the CheB family. Phosphorylated by CheA. Phosphorylation of the N-terminal regulatory domain activates the methylesterase activity.

It is found in the cytoplasm. The catalysed reaction is [protein]-L-glutamate 5-O-methyl ester + H2O = L-glutamyl-[protein] + methanol + H(+). It carries out the reaction L-glutaminyl-[protein] + H2O = L-glutamyl-[protein] + NH4(+). Functionally, involved in chemotaxis. Part of a chemotaxis signal transduction system that modulates chemotaxis in response to various stimuli. Catalyzes the demethylation of specific methylglutamate residues introduced into the chemoreceptors (methyl-accepting chemotaxis proteins or MCP) by CheR. Also mediates the irreversible deamidation of specific glutamine residues to glutamic acid. In Sulfurimonas denitrificans (strain ATCC 33889 / DSM 1251) (Thiomicrospira denitrificans (strain ATCC 33889 / DSM 1251)), this protein is Protein-glutamate methylesterase/protein-glutamine glutaminase.